The following is a 445-amino-acid chain: Putative MgpC-like protein MPN_464 (445 aa).

The tract at residues 23–44 (STTVAVQKSDSSGSQGQGTTDN) is disordered. Over residues 31–43 (SDSSGSQGQGTTD) the composition is skewed to low complexity.

It belongs to the MgpC family.

In Mycoplasma pneumoniae (strain ATCC 29342 / M129 / Subtype 1) (Mycoplasmoides pneumoniae), this protein is Putative MgpC-like protein MPN_464.